Reading from the N-terminus, the 102-residue chain is NADH-quinone oxidoreductase subunit K (102 aa).

3 helical membrane passes run 5–25 (LEHY…GIFV), 31–51 (IVIL…MVAF), and 66–86 (FVLT…VVFF).

The protein belongs to the complex I subunit 4L family. As to quaternary structure, NDH-1 is composed of 14 different subunits. Subunits NuoA, H, J, K, L, M, N constitute the membrane sector of the complex.

The protein localises to the cellular chromatophore membrane. It carries out the reaction a quinone + NADH + 5 H(+)(in) = a quinol + NAD(+) + 4 H(+)(out). In terms of biological role, NDH-1 shuttles electrons from NADH, via FMN and iron-sulfur (Fe-S) centers, to quinones in the respiratory chain. The immediate electron acceptor for the enzyme in this species is believed to be ubiquinone. Couples the redox reaction to proton translocation (for every two electrons transferred, four hydrogen ions are translocated across the cytoplasmic membrane), and thus conserves the redox energy in a proton gradient. The protein is NADH-quinone oxidoreductase subunit K of Rhodobacter capsulatus (Rhodopseudomonas capsulata).